A 368-amino-acid polypeptide reads, in one-letter code: Probable dual-specificity RNA methyltransferase RlmN (368 aa).

Residue Glu-108 is the Proton acceptor of the active site. One can recognise a Radical SAM core domain in the interval 114–345 (HAYGNSVCVS…VTVRRGLGAD (232 aa)). Cys-121 and Cys-350 form a disulfide bridge. [4Fe-4S] cluster contacts are provided by Cys-128, Cys-132, and Cys-135. S-adenosyl-L-methionine is bound by residues 175-176 (GE), Ser-207, 230-232 (SLH), and Asn-307. The active-site S-methylcysteine intermediate is Cys-350.

Belongs to the radical SAM superfamily. RlmN family. [4Fe-4S] cluster is required as a cofactor.

The protein resides in the cytoplasm. It catalyses the reaction adenosine(2503) in 23S rRNA + 2 reduced [2Fe-2S]-[ferredoxin] + 2 S-adenosyl-L-methionine = 2-methyladenosine(2503) in 23S rRNA + 5'-deoxyadenosine + L-methionine + 2 oxidized [2Fe-2S]-[ferredoxin] + S-adenosyl-L-homocysteine. The catalysed reaction is adenosine(37) in tRNA + 2 reduced [2Fe-2S]-[ferredoxin] + 2 S-adenosyl-L-methionine = 2-methyladenosine(37) in tRNA + 5'-deoxyadenosine + L-methionine + 2 oxidized [2Fe-2S]-[ferredoxin] + S-adenosyl-L-homocysteine. In terms of biological role, specifically methylates position 2 of adenine 2503 in 23S rRNA and position 2 of adenine 37 in tRNAs. In Pelotomaculum thermopropionicum (strain DSM 13744 / JCM 10971 / SI), this protein is Probable dual-specificity RNA methyltransferase RlmN.